The sequence spans 457 residues: MHIQSSQQNPSFVAELSQAVAGRLGQVEARQVATPREAQQLAQRQEAPKGEGLLSRLGAALARPFVAIIEWLGKLLGSRAHAATQAPLSRQDAPPAASLSAAEIKQMMLQKALPLTLGGLGKASELATLTAERLAKDHTRLASGDGALRSLATALVGIRDGSRIEASRTQAARLLEQSVGGIALQQWGTAGGAASQHVLSASPEQLREIAVQLHAVMDKVALLRHAVESEVKGEPVDKALADGLVEHFGLEAEQYLGEHPDGPYSDAEVMALGLYTNGEYQHLNRSLRQGRELDAGQALIDRGMSAAFEKSGPAEQVVKTFRGTQGRDAFEAVKEGQVGHDAGYLSTSRDPGVARSFAGQGTITTLFGRSGIDVSEISIEGDEQEILYDKGTDMRVLLSAKDGQGVTRRVLEEATLGERSGHGEGLLDALDLATGTDRSGKPQEQDLRLRMRGLDLA.

Residues Leu-99–Lys-232 form the Bacterial Rho-GAP domain. The TR mART core domain maps to Asp-242–Glu-418. Catalysis depends on residues Arg-322, Ser-346, and Glu-385.

Interacts with chaperone protein SpcS; this interaction maintains ExoT in a secretion competent state within the cytoplasm. Interacts with host YWHAB.

It is found in the secreted. The catalysed reaction is L-arginyl-[protein] + NAD(+) = N(omega)-(ADP-D-ribosyl)-L-arginyl-[protein] + nicotinamide + H(+). In terms of biological role, bifunctional effector protein that is secreted and delivered by the type III secretion system into eukaryotic target cells. ADP-ribosylates several eukaryotic proteins including CT10 regulator of kinase (Crk) proteins. In turn, induces atypical anoikis apoptosis by transforming Crk adaptor protein into a cytotoxin. Affects host cell morphology by disrupting the actin cytoskeleton. In addition to this activity, acts via its N-terminal region as a GTPase-activating protein (GAP) for host Rho GTPases including RhoA, Rac1, Cdc42 and Ras. The bacterial Rho-GAP domain activity induces mitochondrial disruption in the target host cell by activating host caspases 3 and 9 that execute cellular death. This activity also causes stress fiber disassembly. The protein is Exoenzyme T (exoT) of Pseudomonas aeruginosa (strain ATCC 15692 / DSM 22644 / CIP 104116 / JCM 14847 / LMG 12228 / 1C / PRS 101 / PAO1).